The sequence spans 269 residues: Ice-binding protein (269 aa).

Positions 1–24 are cleaved as a signal peptide; the sequence is MLKINRKYAIILAIVAFSSFQTEA. 7 consecutive short sequence motifs (probable ice-binding motif (T/S-X-T)) follow at residues 45–47, 65–67, 128–130, 154–156, 180–182, 198–200, and 218–220; these read TVT, SAT, SAQ, TLT, SIT, and AVT. Residues 240 to 263 form a PEP C-terminal anchor region; the sequence is VPEPDSSLAVLGSGLVSLLFAFRK. Residues 245-261 traverse the membrane as a helical segment; it reads SSLAVLGSGLVSLLFAF.

It belongs to the ice-binding protein family.

It is found in the cell outer membrane. Its function is as follows. A probable ice-binding protein that has ice-structuring activities in vitro. Thought not to anchor the cyanobacterium to ice surfaces, as its habitat is shallow puddles fed by glacier meltwater. This Nostoc sp. (strain HG1) protein is Ice-binding protein.